Consider the following 306-residue polypeptide: D-alanine--D-alanine ligase (306 aa).

One can recognise an ATP-grasp domain in the interval 101–303 (KLLWQGAGLP…FSQLVVRILE (203 aa)). 134–189 (ISALGLPLIVKPSREGSSVGMTKVVEENALQGALSLAFQHDDEILIEKWLCGPEFT) lines the ATP pocket. Mg(2+) is bound by residues Asp-257, Glu-270, and Asn-272.

It belongs to the D-alanine--D-alanine ligase family. It depends on Mg(2+) as a cofactor. Mn(2+) is required as a cofactor.

The protein resides in the cytoplasm. It carries out the reaction 2 D-alanine + ATP = D-alanyl-D-alanine + ADP + phosphate + H(+). The protein operates within cell wall biogenesis; peptidoglycan biosynthesis. Functionally, cell wall formation. This is D-alanine--D-alanine ligase from Salmonella paratyphi A (strain ATCC 9150 / SARB42).